A 720-amino-acid chain; its full sequence is DNA replication licensing factor mcm7 (720 aa).

A C4-type zinc finger spans residues 183-210; sequence CDQCGAETYQPIQSPTFMPLIMCPSREC. The MCM domain occupies 331-537; it reads FYEKLAASIA…NDLRLAQHIT (207 aa). ATP-binding residues include Tyr-344, Gly-383, Ala-385, Lys-386, Ser-387, Asn-488, Arg-513, and Arg-603. The short motif at 512 to 515 is the Arginine finger element; sequence SRFD.

Belongs to the MCM family. Component of the mcm2-7 complex (RLF-M). The complex forms a toroidal hexameric ring with the proposed subunit order mcm2-mcm6-mcm4-mcm7-mcm3-mcm5. The heterodimer of mmcm3/mcm5 interacts with mcm4, mmcm6, mcm7 and weakly with mcm2. The N-terminus is required for interaction with mmcm3, though this interaction may not be direct, and remains in a complex with mmcm3 throughout the cell cycle. Begins to associate with zmcm6 at the neurula stage. Component of the replisome complex. Component of the CMG helicase complex, composed of the mcm2-7 complex, the GINS complex and cdc45. In terms of processing, ubiquitinated by traip when forks converge following formation of DNA interstrand cross-links. Short ubiquitin chains on mcm7 promote recruitment of DNA glycosylase neil3. If the interstrand cross-link cannot be cleaved by neil3, the ubiquitin chains continue to grow on mcm7, promoting the unloading of the CMG helicase complex by the vcp/p97 ATPase.

It localises to the nucleus. The protein resides in the chromosome. It catalyses the reaction ATP + H2O = ADP + phosphate + H(+). Acts as a component of the mcm2-7 complex (mcm complex) which is the putative replicative helicase essential for 'once per cell cycle' DNA replication initiation and elongation in eukaryotic cells. The active ATPase sites in the mcm2-7 ring are formed through the interaction surfaces of two neighboring subunits such that a critical structure of a conserved arginine finger motif is provided in trans relative to the ATP-binding site of the Walker A box of the adjacent subunit. The six ATPase active sites, however, are likely to contribute differentially to the complex helicase activity. The existence of maternal and zygotic forms of mcm3 and mcm6 suggests that specific forms of mcm2-7 complexes may be used during different stages of development. The chain is DNA replication licensing factor mcm7 from Xenopus tropicalis (Western clawed frog).